Consider the following 310-residue polypeptide: Prostate androgen-regulated mucin-like protein 1 homolog (310 aa).

The signal sequence occupies residues 1–20; it reads MVYKTLFALCILTAGWRVQS. The Extracellular portion of the chain corresponds to 21 to 258; it reads LPTSAPLSVS…EVEHALSSGS (238 aa). Residues 40–74 show a composition bias toward polar residues; it reads TIWTSSPQNTDADTASPSNGTHNNSVLPVTASAPT. A disordered region spans residues 40–224; that stretch reads TIWTSSPQNT…VPQEKTPPTT (185 aa). 3 N-linked (GlcNAc...) asparagine glycosylation sites follow: Asn58, Asn62, and Asn80. A compositionally biased stretch (polar residues) spans 92–103; sequence SPGSNWEGTNTD. Positions 150 to 209 are enriched in low complexity; sequence SPQAPASSPSSLSTSPPEVFSVSVTTNHSSTVTSTQPTGAPTAPESPTEESSSDHTPTSH. Asn176 is a glycosylation site (N-linked (GlcNAc...) asparagine). Residues 259–279 form a helical membrane-spanning segment; it reads IAAITVTVIAVVLLVFGVAAY. The Cytoplasmic portion of the chain corresponds to 280–310; sequence LKIRHSSYGRLLDDHDYGSWGNYNNPLYDDS. Ser298 carries the phosphoserine modification.

The protein belongs to the PARM family. Post-translationally, highly N-glycosylated and O-glycosylated.

Its subcellular location is the cell membrane. It localises to the golgi apparatus membrane. It is found in the endosome membrane. Functionally, may regulate TLP1 expression and telomerase activity, thus enabling certain prostatic cells to resist apoptosis. This Pongo abelii (Sumatran orangutan) protein is Prostate androgen-regulated mucin-like protein 1 homolog (PARM1).